The chain runs to 82 residues: Sec-independent protein translocase protein TatA (82 aa).

A helical membrane pass occupies residues 1–21; that stretch reads MGSLSIWHWLIVGAVVLLVFG. Residues 43–82 form a disordered region; sequence GLSEDEEKAEAKPVGEPSLRSLDHQGAGDPLKTPDARKIG.

The protein belongs to the TatA/E family. In terms of assembly, the Tat system comprises two distinct complexes: a TatABC complex, containing multiple copies of TatA, TatB and TatC subunits, and a separate TatA complex, containing only TatA subunits. Substrates initially bind to the TatABC complex, which probably triggers association of the separate TatA complex to form the active translocon.

The protein resides in the cell inner membrane. Functionally, part of the twin-arginine translocation (Tat) system that transports large folded proteins containing a characteristic twin-arginine motif in their signal peptide across membranes. TatA could form the protein-conducting channel of the Tat system. The polypeptide is Sec-independent protein translocase protein TatA (Methylocella silvestris (strain DSM 15510 / CIP 108128 / LMG 27833 / NCIMB 13906 / BL2)).